The sequence spans 284 residues: MTAQRIDGKAIAQSIRTQLKEKVTARKEAGQRVPGLAVILVGADPASQVYVGSKRRACEEVGFLSRSYDLDTTTSEAELLTLIDECNEDPAIDGILVQLPLPEHIEESKVIERIRPDKDVDGFHPYNVGRLAQRIPVLRSCTPMGIMTLIKTTGIDTYGLDAVIVGASNIVGRPMSLELLLAGCTTTTCHRFTRNLEQKVRQADLLVVAVGKPGFIPGEWIKPGAIVIDVGINRLEDGSLAGDVQFDAASENASFITPVPGGVGPMTIASLLENTLYAAEQYHD.

NADP(+)-binding positions include 166 to 168 (GAS) and isoleucine 232.

The protein belongs to the tetrahydrofolate dehydrogenase/cyclohydrolase family. As to quaternary structure, homodimer.

The enzyme catalyses (6R)-5,10-methylene-5,6,7,8-tetrahydrofolate + NADP(+) = (6R)-5,10-methenyltetrahydrofolate + NADPH. It carries out the reaction (6R)-5,10-methenyltetrahydrofolate + H2O = (6R)-10-formyltetrahydrofolate + H(+). Its pathway is one-carbon metabolism; tetrahydrofolate interconversion. Its function is as follows. Catalyzes the oxidation of 5,10-methylenetetrahydrofolate to 5,10-methenyltetrahydrofolate and then the hydrolysis of 5,10-methenyltetrahydrofolate to 10-formyltetrahydrofolate. This is Bifunctional protein FolD from Shewanella sediminis (strain HAW-EB3).